Consider the following 587-residue polypeptide: Arginine--tRNA ligase (587 aa).

The short motif at 126-136 is the 'HIGH' region element; sequence ANPTGPLHVGH.

The protein belongs to the class-I aminoacyl-tRNA synthetase family. In terms of assembly, monomer.

Its subcellular location is the cytoplasm. The catalysed reaction is tRNA(Arg) + L-arginine + ATP = L-arginyl-tRNA(Arg) + AMP + diphosphate. The polypeptide is Arginine--tRNA ligase (Aromatoleum aromaticum (strain DSM 19018 / LMG 30748 / EbN1) (Azoarcus sp. (strain EbN1))).